Here is a 260-residue protein sequence, read N- to C-terminus: MSNLINGKIPNQAIQTLKIVKDLFGSSIVGVYLFGSAVNGGLRINSDVDVLVVVNHSLPQLTRKKLTERLMTISGKIGNTDSVRPLEVTVINRSEVVPWQYPPKREFIYGEWLRGEFENGQIQEPSYDPDLAIVLAQARKNSISLFGPDSSSILVSVPLTDIRRAIKDSLPELIEGIKGDERNVILTLARMWQTVTTGEITSKDVAAEWAIPLLPKEHVTLLDIARKGYRGECDDKWEGLYSKVKALVKYMKNSIETSLN.

The catalysed reaction is spectinomycin + ATP = 9-O-adenylylspectinomycin + diphosphate. Mediates bacterial resistance to the antibiotic spectinomycin but not streptomycin. The chain is Spectinomycin 9-adenylyltransferase (ant1) from Staphylococcus aureus (strain Mu50 / ATCC 700699).